Here is a 247-residue protein sequence, read N- to C-terminus: T-cell surface glycoprotein CD8 alpha chain (247 aa).

The first 27 residues, 1–27, serve as a signal peptide directing secretion; that stretch reads MASPLTRFLSLNLLLLGESIILGSGEA. The Ig-like V-type domain occupies 28 to 139; the sequence is KPQAPELRIF…SVISNSVMYF (112 aa). Over 28–196 the chain is Extracellular; the sequence is KPQAPELRIF…TGLDFACDIY (169 aa). Cysteine 53 and cysteine 129 are disulfide-bonded. 3 N-linked (GlcNAc...) asparagine glycosylation sites follow: asparagine 69, asparagine 97, and asparagine 150. The disordered stretch occupies residues 156-182; it reads PVLRTPSPVHPTGTSQPQRPEDCRPRG. Residues 197 to 217 traverse the membrane as a helical segment; sequence IWAPLAGICVALLLSLIITLI. Topologically, residues 218 to 247 are cytoplasmic; it reads CYHRSRKRVCKCPRPLVRQEGKPRPSEKIV.

Forms disulfide-linked heterodimers with CD8B at the cell surface. Also forms homodimers in several cell types including NK-cells or peripheral blood T-lymphocytes. Interacts with the MHC class I HLA-A/B2M dimer. Interacts with LCK in a zinc-dependent manner. Post-translationally, palmitoylated, but association with CD8B seems to be more important for the enrichment of CdD8A in lipid rafts. In terms of processing, phosphorylated in cytotoxic T-lymphocytes (CTLs) following activation.

Its subcellular location is the cell membrane. Functionally, integral membrane glycoprotein that plays an essential role in the immune response and serves multiple functions in responses against both external and internal offenses. In T-cells, functions primarily as a coreceptor for MHC class I molecule:peptide complex. The antigens presented by class I peptides are derived from cytosolic proteins while class II derived from extracellular proteins. Interacts simultaneously with the T-cell receptor (TCR) and the MHC class I proteins presented by antigen presenting cells (APCs). In turn, recruits the Src kinase LCK to the vicinity of the TCR-CD3 complex. LCK then initiates different intracellular signaling pathways by phosphorylating various substrates ultimately leading to lymphokine production, motility, adhesion and activation of cytotoxic T-lymphocytes (CTLs). This mechanism enables CTLs to recognize and eliminate infected cells and tumor cells. In NK-cells, the presence of CD8A homodimers at the cell surface provides a survival mechanism allowing conjugation and lysis of multiple target cells. CD8A homodimer molecules also promote the survival and differentiation of activated lymphocytes into memory CD8 T-cells. The polypeptide is T-cell surface glycoprotein CD8 alpha chain (Cd8a) (Mus musculus (Mouse)).